A 267-amino-acid polypeptide reads, in one-letter code: Small ribosomal subunit protein uS2 (267 aa).

Residues 232 to 267 (ATVREEEFADAPAEDAKPARRAPAKKAAADKGEAQA) are disordered. Residues 258–267 (AAADKGEAQA) show a composition bias toward basic and acidic residues.

The protein belongs to the universal ribosomal protein uS2 family.

This Stenotrophomonas maltophilia (strain R551-3) protein is Small ribosomal subunit protein uS2.